Consider the following 255-residue polypeptide: NAD kinase (255 aa).

The Proton acceptor role is filled by Asp-44. Residues 44 to 45 (DG), His-49, 114 to 115 (NE), Asp-144, Ala-152, 155 to 160 (SAYNLS), and Gln-216 each bind NAD(+).

Belongs to the NAD kinase family. Requires a divalent metal cation as cofactor.

It is found in the cytoplasm. The enzyme catalyses NAD(+) + ATP = ADP + NADP(+) + H(+). In terms of biological role, involved in the regulation of the intracellular balance of NAD and NADP, and is a key enzyme in the biosynthesis of NADP. Catalyzes specifically the phosphorylation on 2'-hydroxyl of the adenosine moiety of NAD to yield NADP. The sequence is that of NAD kinase from Rickettsia bellii (strain OSU 85-389).